The chain runs to 316 residues: Probable cell division protein WhiA (316 aa).

Residues 275 to 309 (TLKELGEMVSGGKISKSGINHRLRKIDEIAEKLRA) constitute a DNA-binding region (H-T-H motif).

The protein belongs to the WhiA family.

Involved in cell division and chromosome segregation. The polypeptide is Probable cell division protein WhiA (Bacillus cereus (strain B4264)).